Here is a 106-residue protein sequence, read N- to C-terminus: Putative double-stranded DNA mimic protein PM0536 (106 aa).

This sequence belongs to the putative dsDNA mimic protein family.

Functionally, may act as a double-stranded DNA (dsDNA) mimic. Probably regulates the activity of a dsDNA-binding protein. This is Putative double-stranded DNA mimic protein PM0536 from Pasteurella multocida (strain Pm70).